Reading from the N-terminus, the 260-residue chain is Adenosylcobinamide-GDP ribazoletransferase (260 aa).

Transmembrane regions (helical) follow at residues 42 to 62 (PLAG…ANAI), 64 to 84 (LPPL…TGAL), 117 to 137 (FAAL…MAII), 144 to 164 (YALL…LAFW), 192 to 212 (GLGL…VALI), 214 to 234 (ALVL…AKIG), and 240 to 260 (TLGA…VMAL).

This sequence belongs to the CobS family. Mg(2+) is required as a cofactor.

It localises to the cell inner membrane. The enzyme catalyses alpha-ribazole + adenosylcob(III)inamide-GDP = adenosylcob(III)alamin + GMP + H(+). It catalyses the reaction alpha-ribazole 5'-phosphate + adenosylcob(III)inamide-GDP = adenosylcob(III)alamin 5'-phosphate + GMP + H(+). The protein operates within cofactor biosynthesis; adenosylcobalamin biosynthesis; adenosylcobalamin from cob(II)yrinate a,c-diamide: step 7/7. Joins adenosylcobinamide-GDP and alpha-ribazole to generate adenosylcobalamin (Ado-cobalamin). Also synthesizes adenosylcobalamin 5'-phosphate from adenosylcobinamide-GDP and alpha-ribazole 5'-phosphate. This is Adenosylcobinamide-GDP ribazoletransferase from Brucella abortus (strain S19).